We begin with the raw amino-acid sequence, 158 residues long: SsrA-binding protein (158 aa).

The protein belongs to the SmpB family.

The protein localises to the cytoplasm. Its function is as follows. Required for rescue of stalled ribosomes mediated by trans-translation. Binds to transfer-messenger RNA (tmRNA), required for stable association of tmRNA with ribosomes. tmRNA and SmpB together mimic tRNA shape, replacing the anticodon stem-loop with SmpB. tmRNA is encoded by the ssrA gene; the 2 termini fold to resemble tRNA(Ala) and it encodes a 'tag peptide', a short internal open reading frame. During trans-translation Ala-aminoacylated tmRNA acts like a tRNA, entering the A-site of stalled ribosomes, displacing the stalled mRNA. The ribosome then switches to translate the ORF on the tmRNA; the nascent peptide is terminated with the 'tag peptide' encoded by the tmRNA and targeted for degradation. The ribosome is freed to recommence translation, which seems to be the essential function of trans-translation. The chain is SsrA-binding protein from Caldanaerobacter subterraneus subsp. tengcongensis (strain DSM 15242 / JCM 11007 / NBRC 100824 / MB4) (Thermoanaerobacter tengcongensis).